We begin with the raw amino-acid sequence, 328 residues long: Beta-ketoacyl-[acyl-carrier-protein] synthase III (328 aa).

Active-site residues include Cys122 and His255. An ACP-binding region spans residues 256 to 260 (QANIR). Asn285 is an active-site residue.

It belongs to the thiolase-like superfamily. FabH family. As to quaternary structure, homodimer.

Its subcellular location is the cytoplasm. It catalyses the reaction malonyl-[ACP] + acetyl-CoA + H(+) = 3-oxobutanoyl-[ACP] + CO2 + CoA. It participates in lipid metabolism; fatty acid biosynthesis. In terms of biological role, catalyzes the condensation reaction of fatty acid synthesis by the addition to an acyl acceptor of two carbons from malonyl-ACP. Catalyzes the first condensation reaction which initiates fatty acid synthesis and may therefore play a role in governing the total rate of fatty acid production. Possesses both acetoacetyl-ACP synthase and acetyl transacylase activities. Its substrate specificity determines the biosynthesis of branched-chain and/or straight-chain of fatty acids. The chain is Beta-ketoacyl-[acyl-carrier-protein] synthase III from Herminiimonas arsenicoxydans.